Here is a 517-residue protein sequence, read N- to C-terminus: MAEKFFLKGEDKVNMEGVLGSEAVEFFSWSASNHMLTEFTSSRGDLGVQQALCKIVEGSDWTYAIYWQVAKSKSGKSALIWGDGHCRETKIGQGEGANDSAHQKMMDGNKKKMVLQKIHTCFGGSEDDNIAAKLESVSDVEVFYLTSMYYIFPFDKPSSPSQSFNSARSIWGSDLKGCLEHFQSRSYLAKLARFETLVFVPLKSGVVELGSVKSIPEDQNLIQMVKTSVVVSNPPQPKANTKIFGRELSLGGAKSGPISINFSPKVEEELSFASDSYEVQAALGSSQVYGNSSNGYRSDEGEGKLYKEELDERKPRKRGRKPANGREEALNHVEAERQRREKLNQRFYALRAVVPNISKMDKASLLGDAIAYITDLQARIRVLDAEKEMVGDKQKQQVILEIDFHQRQDDAVVRVGCPLNAHPVSRVLKTFQEHQVVAQESNVSLTENGELVHMFSIRAPGPAAEDLKEKLTAASRFALKTRWSVSVIRLLCFARLFVYEHQCLAGKFALYFVDYTI.

Residues 290–331 (GNSSNGYRSDEGEGKLYKEELDERKPRKRGRKPANGREEALN) form a disordered region. A compositionally biased stretch (basic and acidic residues) spans 297–314 (RSDEGEGKLYKEELDERK). The interval 327-340 (EEALNHVEAERQRR) is basic motif; degenerate. Positions 327–376 (EEALNHVEAERQRREKLNQRFYALRAVVPNISKMDKASLLGDAIAYITDL) constitute a bHLH domain. Residues 341–376 (EKLNQRFYALRAVVPNISKMDKASLLGDAIAYITDL) are helix-loop-helix motif.

It is found in the nucleus. Functionally, transcription factor that negatively regulates jasmonate (JA) signaling. Negatively regulates JA-dependent response to wounding, JA-induced expression of defense genes, JA-dependent responses against herbivorous insects, and JA-dependent resistance against Botrytis cinerea infection. Plays a positive role in resistance against the bacterial pathogen Pseudomonas syringae pv tomato DC3000. The chain is Transcription factor MTB3 from Solanum lycopersicum (Tomato).